The chain runs to 75 residues: U9-theraphotoxin-Cg1a (75 aa).

The first 21 residues, 1 to 21 (MKTLVLFIIFGLAALFLLSSA), serve as a signal peptide directing secretion. The propeptide occupies 22-29 (NELEETER). 3 disulfide bridges follow: C31–C46, C38–C51, and C45–C58.

The protein belongs to the neurotoxin 10 (Hwtx-1) family. 43 (Jztx-49) subfamily. In terms of tissue distribution, expressed by the venom gland.

The protein resides in the secreted. Its function is as follows. Probable ion channel inhibitor. The protein is U9-theraphotoxin-Cg1a of Chilobrachys guangxiensis (Chinese earth tiger tarantula).